A 573-amino-acid polypeptide reads, in one-letter code: Maestro heat-like repeat-containing protein family member 9 (573 aa).

5 HEAT repeats span residues 118-155 (LYKL…FTVT), 252-289 (PLLT…FHAE), 292-328 (TMVS…TSPK), 357-394 (SVAP…ITNL), and 418-458 (QYFP…LLNC).

The protein is Maestro heat-like repeat-containing protein family member 9 (MROH9) of Homo sapiens (Human).